We begin with the raw amino-acid sequence, 502 residues long: Transmembrane prolyl 4-hydroxylase (502 aa).

The segment at 1-29 (MAAAAVTGQRPETAAAEEASRPQWAPPDH) is disordered. Over 1-60 (MAAAAVTGQRPETAAAEEASRPQWAPPDHCQAQAAAGLGDGEDAPVRPLCKPRGICSRAY) the chain is Cytoplasmic. A helical; Signal-anchor for type II membrane protein membrane pass occupies residues 61-81 (FLVLMVFVHLYLGNVLALLLF). Over 82-502 (VHYSNGDESS…RAYRDARVEL (421 aa)) the chain is Lumenal. Positions 89-111 (ESSDPGPQHRAQGPGPEPTLGPL) are disordered. 2 consecutive EF-hand domains span residues 185 to 220 (TMQV…GNGW) and 224 to 259 (PESI…DFHK). Ca(2+) is bound by residues Asp-198, Asn-200, Asp-202, His-204, Glu-209, Asp-237, Asp-239, Asp-241, and Glu-248. The 151-residue stretch at 310-460 (LSEPLQVVRY…KWIANNWINV (151 aa)) folds into the Fe2OG dioxygenase domain. Fe cation is bound by residues His-328 and Asp-330. Residues Asn-348 and Asn-368 are each glycosylated (N-linked (GlcNAc...) asparagine). Residue Glu-374 coordinates Fe cation. Asn-382 carries N-linked (GlcNAc...) asparagine glycosylation. Lys-451 provides a ligand contact to 2-oxoglutarate.

As to quaternary structure, homodimer. It depends on Fe(2+) as a cofactor. L-ascorbate is required as a cofactor. Glycosylated. In terms of tissue distribution, widely expressed with highest levels in adult pancreas, heart, skeletal muscle, brain, placenta, kidney and adrenal gland. Expressed at lower levels in epiphyseal cartilage and in fibroblasts.

It is found in the endoplasmic reticulum membrane. The catalysed reaction is L-prolyl-[hypoxia-inducible factor alpha subunit] + 2-oxoglutarate + O2 = trans-4-hydroxy-L-prolyl-[hypoxia-inducible factor alpha subunit] + succinate + CO2. In terms of biological role, catalyzes the post-translational formation of 4-hydroxyproline in hypoxia-inducible factor (HIF) alpha proteins. Hydroxylates HIF1A at 'Pro-402' and 'Pro-564'. May function as a cellular oxygen sensor and, under normoxic conditions, may target HIF through the hydroxylation for proteasomal degradation via the von Hippel-Lindau ubiquitination complex. In Homo sapiens (Human), this protein is Transmembrane prolyl 4-hydroxylase (P4HTM).